A 465-amino-acid polypeptide reads, in one-letter code: Fumarate hydratase class II (465 aa).

Substrate-binding positions include 100-102, 131-134, 141-143, and Thr189; these read SGT, HPND, and SSN. Catalysis depends on His190, which acts as the Proton donor/acceptor. The active site involves Ser320. Residues Ser321 and 326–328 each bind substrate; that span reads KVN.

The protein belongs to the class-II fumarase/aspartase family. Fumarase subfamily. As to quaternary structure, homotetramer.

The protein localises to the cytoplasm. It catalyses the reaction (S)-malate = fumarate + H2O. The protein operates within carbohydrate metabolism; tricarboxylic acid cycle; (S)-malate from fumarate: step 1/1. Involved in the TCA cycle. Catalyzes the stereospecific interconversion of fumarate to L-malate. This chain is Fumarate hydratase class II, found in Mesorhizobium japonicum (strain LMG 29417 / CECT 9101 / MAFF 303099) (Mesorhizobium loti (strain MAFF 303099)).